The primary structure comprises 464 residues: MALTQFENDLEILRDMYPELEMKSVKVEEEGEFPQRINGKLLFKISLLADVNIEFGEQHMLLSNLSNECVEFTIYSCHYPDIRRCVVMDIKSLWISTDEKKMLIDKALRLVEETVDMSIEFADSFTSILILIFGFLIDDTAILLFPNGIRKCLTQDQYDLFKQISEEATLQKVSRSNYHCCICMEMEKGVRMIKLPCENANVEHYLCRGCAKSYFTAMIQENRISSVRCPQCEYKELKLEDFKSYKKMLKALFTPLIPVSFLKEVIDTELCERYEKMFYNQAATRLSKYCPYACVTCRRCDSWCTKEDLDDAMIQCQKCHFVFCFDCLHAWHGYNNKCGKKVSLSTDIIEEYLDDTVTSYERKRKLEAKYGRRVLELEVNDYLAEKMLDLAIKKEGSNLQRCPKCKVVVERSEGCNKMKCEVCGTLFCFICGVLLYPEDPYEHFREAYSGCYGRLFEGMPGTET.

The segment at Ser-176–Leu-455 is TRIAD supradomain. Positions 180, 183, 207, 210, 290, 300, 316, 319, 402, and 405 each coordinate Zn(2+). The segment at Cys-180–Glu-236 adopts an RING-type 1 zinc-finger fold. The segment at Asp-267–Cys-338 adopts an IBR-type zinc-finger fold. The RING-type 2; atypical zinc-finger motif lies at Cys-402–Cys-431. The active site involves Cys-415. Zn(2+)-binding residues include Cys-420, Cys-423, Cys-428, Cys-431, His-443, and Cys-451.

It belongs to the RBR family. RNF14 subfamily. Interacts with translation release factors eRF1 (SUP45) and eRF3 (SUP35) in vitro.

It catalyses the reaction [E2 ubiquitin-conjugating enzyme]-S-ubiquitinyl-L-cysteine + [acceptor protein]-L-lysine = [E2 ubiquitin-conjugating enzyme]-L-cysteine + [acceptor protein]-N(6)-ubiquitinyl-L-lysine.. The protein operates within protein modification; protein ubiquitination. E3 ubiquitin-protein ligase involved in translation quality control. Involved in the rescue of stalled ribosomes by promoting ubiquitination and degradation of proteins on stalled ribosomes. Specifically required to resolve RNA-protein cross-links caused by reactive aldehydes, which trigger translation stress by stalling ribosomes: acts by catalying 'Lys-6'-linked ubiquitination of RNA-protein cross-links, leading to their degradation. Interacts with the translation termination factors eRF1 (SUP45) and eRF3 (SUP35); overexpression decreases the efficiency of translation termination. This chain is E3 ubiquitin-protein ligase ITT1, found in Saccharomyces cerevisiae (strain ATCC 204508 / S288c) (Baker's yeast).